The primary structure comprises 955 residues: Villin-5 (955 aa).

4 Gelsolin-like repeats span residues 29–111 (FKPV…DKFL), 152–218 (VHVK…VEDG), 274–339 (LLHE…TVMF), and 644–712 (HFTQ…GSEP). Disordered stretches follow at residues 741–783 (KGGG…RVRV) and 801–895 (NSRN…GLPV). Polar residues predominate over residues 756-776 (PTYSGRSTVQDKSQRSRSMSF). Residues 817–836 (PKSATPDSSSAPSKSSATAS) show a composition bias toward low complexity. Basic and acidic residues predominate over residues 842-864 (DRPKSVKDGSELEKPKQEEDAKE). The segment covering 867 to 878 (NTMTSRVESLTI) has biased composition (polar residues). Residues 890–955 (DEGLPVYPYD…NRMKIALQLF (66 aa)) enclose the HP domain.

Belongs to the villin/gelsolin family.

The protein resides in the cytoplasm. Its subcellular location is the cytoskeleton. Its function is as follows. Ca(2+)-regulated actin-binding protein. Binds actin microfilaments (MFs). Involved in actin filament bundling, severing and capping. Caps the barbed end of actin filaments and is able to sever them in a calcium-dependent manner. This Oryza sativa subsp. japonica (Rice) protein is Villin-5.